We begin with the raw amino-acid sequence, 102 residues long: Small ribosomal subunit protein uS10 (102 aa).

Belongs to the universal ribosomal protein uS10 family. As to quaternary structure, part of the 30S ribosomal subunit.

Its function is as follows. Involved in the binding of tRNA to the ribosomes. The protein is Small ribosomal subunit protein uS10 of Syntrophotalea carbinolica (strain DSM 2380 / NBRC 103641 / GraBd1) (Pelobacter carbinolicus).